The chain runs to 364 residues: Dihydroorotate dehydrogenase (quinone) (364 aa).

FMN-binding positions include 61–65 (AGFDK) and Ser85. Substrate is bound at residue Lys65. 110–114 (NRMGF) lines the substrate pocket. 2 residues coordinate FMN: Asn139 and Asn170. Asn170 is a binding site for substrate. The active-site Nucleophile is Ser173. Residue Asn175 participates in substrate binding. Lys214 and Ser242 together coordinate FMN. 243–244 (NT) lines the substrate pocket. FMN contacts are provided by residues Gly266, Gly295, and 316–317 (YS).

Belongs to the dihydroorotate dehydrogenase family. Type 2 subfamily. In terms of assembly, monomer. FMN serves as cofactor.

It localises to the cell membrane. It catalyses the reaction (S)-dihydroorotate + a quinone = orotate + a quinol. The protein operates within pyrimidine metabolism; UMP biosynthesis via de novo pathway; orotate from (S)-dihydroorotate (quinone route): step 1/1. Its function is as follows. Catalyzes the conversion of dihydroorotate to orotate with quinone as electron acceptor. This is Dihydroorotate dehydrogenase (quinone) from Bradyrhizobium sp. (strain BTAi1 / ATCC BAA-1182).